We begin with the raw amino-acid sequence, 74 residues long: Acyl carrier protein (74 aa).

Residues 1 to 73 (MAVFEKVQEI…DLVAYVEEKT (73 aa)) form the Carrier domain. Ser35 carries the O-(pantetheine 4'-phosphoryl)serine modification.

The protein belongs to the acyl carrier protein (ACP) family. 4'-phosphopantetheine is transferred from CoA to a specific serine of apo-ACP by AcpS. This modification is essential for activity because fatty acids are bound in thioester linkage to the sulfhydryl of the prosthetic group.

It is found in the cytoplasm. Its pathway is lipid metabolism; fatty acid biosynthesis. Carrier of the growing fatty acid chain in fatty acid biosynthesis. The chain is Acyl carrier protein from Streptococcus thermophilus (strain CNRZ 1066).